A 152-amino-acid polypeptide reads, in one-letter code: CMT1A duplicated region transcript 4 protein (152 aa).

The span at 1-11 (MDARRMKKEEG) shows a compositional bias: basic and acidic residues. 2 disordered regions span residues 1 to 23 (MDARRMKKEEGLTENTGLPRKLL) and 60 to 89 (ERPWASRQNKPSSVIQPKRRKSSKSSGKAV). A compositionally biased stretch (polar residues) spans 65–74 (SRQNKPSSVI).

As to expression, expressed in fetal skeletal muscle and kidney.

In Homo sapiens (Human), this protein is CMT1A duplicated region transcript 4 protein (CDRT4).